The chain runs to 476 residues: Argininosuccinate lyase (476 aa).

It belongs to the lyase 1 family. Argininosuccinate lyase subfamily.

It is found in the cytoplasm. It catalyses the reaction 2-(N(omega)-L-arginino)succinate = fumarate + L-arginine. Its pathway is amino-acid biosynthesis; L-arginine biosynthesis; L-arginine from L-ornithine and carbamoyl phosphate: step 3/3. The polypeptide is Argininosuccinate lyase (Nitrosospira multiformis (strain ATCC 25196 / NCIMB 11849 / C 71)).